We begin with the raw amino-acid sequence, 99 residues long: Large ribosomal subunit protein uL23 (99 aa).

Belongs to the universal ribosomal protein uL23 family. In terms of assembly, part of the 50S ribosomal subunit. Contacts protein L29, and trigger factor when it is bound to the ribosome.

One of the early assembly proteins it binds 23S rRNA. One of the proteins that surrounds the polypeptide exit tunnel on the outside of the ribosome. Forms the main docking site for trigger factor binding to the ribosome. The polypeptide is Large ribosomal subunit protein uL23 (Psychromonas ingrahamii (strain DSM 17664 / CCUG 51855 / 37)).